Reading from the N-terminus, the 371-residue chain is Cysteine proteinase EP-B 1 (371 aa).

A signal peptide spans 1 to 28; the sequence is MGLLSKKLLVASMVAAVLAVAAVELCSA. A propeptide spans 29 to 133 (activation peptide); it reads IPMEDKDLES…FMYAALNVSD (105 aa). Residue Asn-130 is glycosylated (N-linked (GlcNAc...) asparagine). 3 disulfides stabilise this stretch: Cys-155-Cys-197, Cys-189-Cys-230, and Cys-291-Cys-343. Residue Cys-158 is part of the active site. Residues His-297 and Asn-318 contribute to the active site.

The protein belongs to the peptidase C1 family.

The polypeptide is Cysteine proteinase EP-B 1 (Hordeum vulgare (Barley)).